We begin with the raw amino-acid sequence, 150 residues long: Small ribosomal subunit protein eS19 (150 aa).

The protein belongs to the eukaryotic ribosomal protein eS19 family. Part of the 30S ribosomal subunit.

May be involved in maturation of the 30S ribosomal subunit. The polypeptide is Small ribosomal subunit protein eS19 (Thermococcus kodakarensis (strain ATCC BAA-918 / JCM 12380 / KOD1) (Pyrococcus kodakaraensis (strain KOD1))).